The sequence spans 212 residues: Small ribosomal subunit protein uS19m (212 aa).

The N-terminal 29 residues, 1–29, are a transit peptide targeting the mitochondrion; the sequence is MAFCTKLGGHWKQGVNVPVSSMLGSLRYM. The 79-residue stretch at 31-109 folds into the RRM domain; that stretch reads TKLYIGGLSP…FNISVNVAKD (79 aa).

Belongs to the universal ribosomal protein uS19 family. In terms of assembly, component of the mitochondrial ribosome small subunit.

The protein resides in the mitochondrion. In terms of biological role, the RNA-binding domain found in RPS19 may functionally replace the missing mitochondrial RPS13. The sequence is that of Small ribosomal subunit protein uS19m (RPS19) from Arabidopsis thaliana (Mouse-ear cress).